The sequence spans 298 residues: Small ribosomal subunit protein uS2 (298 aa).

Positions 232 to 298 (ETFEGDDIPS…TAEAEEPAAE (67 aa)) are disordered. Over residues 234–250 (FEGDDIPSAIDFEDETP) the composition is skewed to acidic residues. Low complexity predominate over residues 251-276 (EPVAEVADAEVAAAEPVAEAAPTAEA).

The protein belongs to the universal ribosomal protein uS2 family.

The protein is Small ribosomal subunit protein uS2 of Acaryochloris marina (strain MBIC 11017).